The primary structure comprises 145 residues: Large ribosomal subunit protein uL16 (145 aa).

It belongs to the universal ribosomal protein uL16 family. As to quaternary structure, part of the 50S ribosomal subunit.

Its function is as follows. Binds 23S rRNA and is also seen to make contacts with the A and possibly P site tRNAs. The protein is Large ribosomal subunit protein uL16 of Lactobacillus johnsonii (strain CNCM I-12250 / La1 / NCC 533).